Here is a 247-residue protein sequence, read N- to C-terminus: MELDIDLPDFGPFEGGAPVSEFSSPDNPVFGLDLSGSLHSSVMSVSPTELLLTENLMSAPGSTALTHLTTPSGYDTSPAFTEDWNASPLFAQNDFETAQEWPSLFPDAETSAAPAPALAAPAPVPAAQAEDSPSVDSEDFEPARRPSQARKSSASSSPSGRHSSVSGVSARRRGKPLPPITIDDPSDTVGMKRAKNTLAARKSRARKAERMDELERQVRELEAEKEKLAAELAHWKSLASSQGAAGQ.

2 stretches are compositionally biased toward low complexity: residues 107 to 129 (DAET…AAQA) and 145 to 169 (RPSQ…SGVS). The segment at 107-213 (DAETSAAPAP…RARKAERMDE (107 aa)) is disordered. The bZIP domain occupies 186–247 (SDTVGMKRAK…LASSQGAAGQ (62 aa)). A basic motif region spans residues 192–210 (KRAKNTLAARKSRARKAER). A leucine-zipper region spans residues 214–228 (LERQVRELEAEKEKL).

Belongs to the bZIP family. GCN4 subfamily. In terms of assembly, binds DNA as a dimer.

The protein localises to the nucleus. In terms of biological role, general amino acid control transactivator. Binds to the AP-1 consensus DNA binding element 5'-[AG]TGACTCAT-3'. The protein is Cross-pathway control protein 1 (CPC-1) of Cryphonectria parasitica (Chestnut blight fungus).